The chain runs to 389 residues: MVSVSGIRKVQRAEGPATVLAIGTANPPNCIDQSTYADYYFRVTNSEHMTDLKKKFQRICERTQIKNRHMYLTEEILKENPNMCAYKAPSLDAREDMMIREVPRVGKEAATKAIKEWGQPMSKITHLIFCTTSGVALPGVDYELIVLLGLDPCVKRYMMYHQGCFAGGTVLRLAKDLAENNKDARVLIVCSENTAVTFRGPSETDMDSLVGQALFADGAAAIIIGSDPVPEVEKPIFELVSTDQKLVPGSHGAIGGLLREVGLTFYLNKSVPDIISQNINDALNKAFDPLGISDYNSIFWIAHPGGRAILDQVEQKVNLKPEKMKATRDVLSNYGNMSSACVFFIMDLMRKRSLEEGLKTTGEGLDWGVLFGFGPGLTIETVVLRSVAI.

Substrate is bound at residue 55-58 (KFQR). Residue C164 is part of the active site. Substrate contacts are provided by residues L267 and 305–307 (GGR).

The protein belongs to the thiolase-like superfamily. Chalcone/stilbene synthases family. As to quaternary structure, homodimer.

Its subcellular location is the cytoplasm. It carries out the reaction 4-coumaroyl-CoA + 3 malonyl-CoA + 3 H(+) = trans-resveratrol + 4 CO2 + 4 CoA. The protein operates within phytoalexin biosynthesis; 3,4',5-trihydroxystilbene biosynthesis; 3,4',5-trihydroxystilbene from trans-4-coumarate: step 2/2. This is Stilbene synthase 3 from Arachis hypogaea (Peanut).